Reading from the N-terminus, the 302-residue chain is Nucleotide-binding protein SERP0433 (302 aa).

18–25 (GMSGAGKS) provides a ligand contact to ATP. Position 69-72 (69-72 (DLRG)) interacts with GTP.

The protein belongs to the RapZ-like family.

Its function is as follows. Displays ATPase and GTPase activities. The protein is Nucleotide-binding protein SERP0433 of Staphylococcus epidermidis (strain ATCC 35984 / DSM 28319 / BCRC 17069 / CCUG 31568 / BM 3577 / RP62A).